The following is a 292-amino-acid chain: MSEFDLTTREGRWRHFGSVDPIEGTKPTVKEEMTDLQSTHKDFLFEIEEVGIKNLVYPVVIDNYQTAGTFAFSTSLTREEKGINMSRILESVEKHYDNGLELSFNNLEAVLHTLEKHMKQSSAGVDVSGKWFFNRYSPVTNIKAVGNADVTYGLAVAGDQVTRKELTVQATVTTLCPCSKEISEYSAHNQRGVITVKMYIDPSATLPTDYKEVILDAMEANASSILYPILKRPDEKRVTERAYENPRFVEDLIRLIAADLVELDWAEGFDIECRNEESIHQHDAFAKLKYRK.

It belongs to the GTP cyclohydrolase IV family.

It carries out the reaction GTP + H2O = 7,8-dihydroneopterin 3'-triphosphate + formate + H(+). The protein operates within cofactor biosynthesis; 7,8-dihydroneopterin triphosphate biosynthesis; 7,8-dihydroneopterin triphosphate from GTP: step 1/1. In terms of biological role, converts GTP to 7,8-dihydroneopterin triphosphate. This Staphylococcus carnosus (strain TM300) protein is GTP cyclohydrolase FolE2.